A 339-amino-acid polypeptide reads, in one-letter code: Holliday junction branch migration complex subunit RuvB (339 aa).

The tract at residues 1 to 187 (MQGFEDENRI…FGVICKLDYY (187 aa)) is large ATPase domain (RuvB-L). Residues L26, R27, G68, K71, T72, T73, 134 to 136 (EDF), R177, Y187, and R224 each bind ATP. T72 contributes to the Mg(2+) binding site. The small ATPAse domain (RuvB-S) stretch occupies residues 188–258 (TVDELSKIVL…VAKDALELLG (71 aa)). The interval 261–339 (SLGLDFVDEK…HLKIPYPNEK (79 aa)) is head domain (RuvB-H). DNA contacts are provided by R297, R316, and R321.

It belongs to the RuvB family. As to quaternary structure, homohexamer. Forms an RuvA(8)-RuvB(12)-Holliday junction (HJ) complex. HJ DNA is sandwiched between 2 RuvA tetramers; dsDNA enters through RuvA and exits via RuvB. An RuvB hexamer assembles on each DNA strand where it exits the tetramer. Each RuvB hexamer is contacted by two RuvA subunits (via domain III) on 2 adjacent RuvB subunits; this complex drives branch migration. In the full resolvosome a probable DNA-RuvA(4)-RuvB(12)-RuvC(2) complex forms which resolves the HJ.

The protein resides in the cytoplasm. It carries out the reaction ATP + H2O = ADP + phosphate + H(+). In terms of biological role, the RuvA-RuvB-RuvC complex processes Holliday junction (HJ) DNA during genetic recombination and DNA repair, while the RuvA-RuvB complex plays an important role in the rescue of blocked DNA replication forks via replication fork reversal (RFR). RuvA specifically binds to HJ cruciform DNA, conferring on it an open structure. The RuvB hexamer acts as an ATP-dependent pump, pulling dsDNA into and through the RuvAB complex. RuvB forms 2 homohexamers on either side of HJ DNA bound by 1 or 2 RuvA tetramers; 4 subunits per hexamer contact DNA at a time. Coordinated motions by a converter formed by DNA-disengaged RuvB subunits stimulates ATP hydrolysis and nucleotide exchange. Immobilization of the converter enables RuvB to convert the ATP-contained energy into a lever motion, pulling 2 nucleotides of DNA out of the RuvA tetramer per ATP hydrolyzed, thus driving DNA branch migration. The RuvB motors rotate together with the DNA substrate, which together with the progressing nucleotide cycle form the mechanistic basis for DNA recombination by continuous HJ branch migration. Branch migration allows RuvC to scan DNA until it finds its consensus sequence, where it cleaves and resolves cruciform DNA. The protein is Holliday junction branch migration complex subunit RuvB of Clostridioides difficile (strain 630) (Peptoclostridium difficile).